Consider the following 849-residue polypeptide: Membrane protein-large ribosomal subunit bL9 fusion protein (849 aa).

The segment at Met-1–Thr-680 is unknown. Helical transmembrane passes span Phe-11–Gln-31 and Ile-64–Phe-84. In terms of domain architecture, GGDEF spans Lys-214 to Glu-342. The interval Val-681–Lys-849 is large ribosomal subunit protein bL9.

The protein belongs to the bacterial ribosomal protein bL9 family.

Its subcellular location is the cell membrane. Its function is as follows. Binds to the 23S rRNA. The polypeptide is Membrane protein-large ribosomal subunit bL9 fusion protein (Aster yellows witches'-broom phytoplasma (strain AYWB)).